Consider the following 1775-residue polypeptide: Stereocilin (1775 aa).

An N-terminal signal peptide occupies residues 1–22; that stretch reads MALSLWPLLLLLLLLLLLSFAV. 14 N-linked (GlcNAc...) asparagine glycosylation sites follow: N65, N202, N297, N366, N427, N476, N540, N565, N656, N824, N916, N964, N1179, and N1274.

The protein belongs to the stereocilin family.

The protein localises to the cell surface. The protein resides in the cell projection. It localises to the kinocilium. It is found in the stereocilium. In terms of biological role, essential to the formation of horizontal top connectors between outer hair cell stereocilia. This Homo sapiens (Human) protein is Stereocilin (STRC).